The chain runs to 494 residues: Ketol-acid reductoisomerase (NADP(+)) (494 aa).

The KARI N-terminal Rossmann domain occupies 14–208; the sequence is LEQLGKCRFM…GGHRAGVLQS (195 aa). NADP(+)-binding positions include 45–48, R68, R76, S78, and 108–110; these read CGAQ and DKQ. Residue H132 is part of the active site. G158 contributes to the NADP(+) binding site. 2 consecutive KARI C-terminal knotted domains span residues 209 to 344 and 345 to 487; these read SFVA…NAPA and FDGA…MKDM. The Mg(2+) site is built by D217, E221, E389, and E393. S414 is a binding site for substrate.

It belongs to the ketol-acid reductoisomerase family. Mg(2+) serves as cofactor.

It catalyses the reaction (2R)-2,3-dihydroxy-3-methylbutanoate + NADP(+) = (2S)-2-acetolactate + NADPH + H(+). The enzyme catalyses (2R,3R)-2,3-dihydroxy-3-methylpentanoate + NADP(+) = (S)-2-ethyl-2-hydroxy-3-oxobutanoate + NADPH + H(+). Its pathway is amino-acid biosynthesis; L-isoleucine biosynthesis; L-isoleucine from 2-oxobutanoate: step 2/4. The protein operates within amino-acid biosynthesis; L-valine biosynthesis; L-valine from pyruvate: step 2/4. Functionally, involved in the biosynthesis of branched-chain amino acids (BCAA). Catalyzes an alkyl-migration followed by a ketol-acid reduction of (S)-2-acetolactate (S2AL) to yield (R)-2,3-dihydroxy-isovalerate. In the isomerase reaction, S2AL is rearranged via a Mg-dependent methyl migration to produce 3-hydroxy-3-methyl-2-ketobutyrate (HMKB). In the reductase reaction, this 2-ketoacid undergoes a metal-dependent reduction by NADPH to yield (R)-2,3-dihydroxy-isovalerate. This chain is Ketol-acid reductoisomerase (NADP(+)), found in Tolumonas auensis (strain DSM 9187 / NBRC 110442 / TA 4).